Reading from the N-terminus, the 453-residue chain is Kynurenine 3-monooxygenase (453 aa).

This sequence belongs to the aromatic-ring hydroxylase family. KMO subfamily. Requires FAD as cofactor.

The catalysed reaction is L-kynurenine + NADPH + O2 + H(+) = 3-hydroxy-L-kynurenine + NADP(+) + H2O. The protein operates within cofactor biosynthesis; NAD(+) biosynthesis; quinolinate from L-kynurenine: step 1/3. Catalyzes the hydroxylation of L-kynurenine (L-Kyn) to form 3-hydroxy-L-kynurenine (L-3OHKyn). Required for synthesis of quinolinic acid. The polypeptide is Kynurenine 3-monooxygenase (Salinispora tropica (strain ATCC BAA-916 / DSM 44818 / JCM 13857 / NBRC 105044 / CNB-440)).